A 277-amino-acid polypeptide reads, in one-letter code: Undecaprenyl-diphosphatase (277 aa).

6 helical membrane-spanning segments follow: residues 44–64 (RAMAFNIIIQLAAILAVVWEF), 86–106 (GNLLLAFMPAVVLGVLFADLI), 110–130 (LFNPVTVAAALVVGGVIMLWA), 184–204 (AATEFSFFLAMPTMVGAAVYS), 215–235 (GDLPVFALGFVTSFIFAMIAV), and 250–270 (FAWYRIVFGLFILATWQFGWV).

Belongs to the UppP family.

It localises to the cell inner membrane. The catalysed reaction is di-trans,octa-cis-undecaprenyl diphosphate + H2O = di-trans,octa-cis-undecaprenyl phosphate + phosphate + H(+). Catalyzes the dephosphorylation of undecaprenyl diphosphate (UPP). Confers resistance to bacitracin. The chain is Undecaprenyl-diphosphatase from Pseudomonas putida (strain ATCC 47054 / DSM 6125 / CFBP 8728 / NCIMB 11950 / KT2440).